Consider the following 307-residue polypeptide: Ribosomal RNA small subunit methyltransferase H (307 aa).

Residues glycine 34–histidine 36, aspartate 53, leucine 88, aspartate 102, and glutamine 109 contribute to the S-adenosyl-L-methionine site.

Belongs to the methyltransferase superfamily. RsmH family.

The protein localises to the cytoplasm. It catalyses the reaction cytidine(1402) in 16S rRNA + S-adenosyl-L-methionine = N(4)-methylcytidine(1402) in 16S rRNA + S-adenosyl-L-homocysteine + H(+). Functionally, specifically methylates the N4 position of cytidine in position 1402 (C1402) of 16S rRNA. This is Ribosomal RNA small subunit methyltransferase H from Sulfurimonas denitrificans (strain ATCC 33889 / DSM 1251) (Thiomicrospira denitrificans (strain ATCC 33889 / DSM 1251)).